The primary structure comprises 59 residues: Transcription elongation factor Spt4 (59 aa).

Residues cysteine 4, cysteine 7, cysteine 16, and cysteine 19 each coordinate Zn(2+).

Belongs to the archaeal Spt4 family. Heterodimer composed of Spt4 and Spt5.

Its function is as follows. Stimulates transcription elongation. This is Transcription elongation factor Spt4 from Methanocaldococcus jannaschii (strain ATCC 43067 / DSM 2661 / JAL-1 / JCM 10045 / NBRC 100440) (Methanococcus jannaschii).